We begin with the raw amino-acid sequence, 146 residues long: Anti-sigma F factor (146 aa).

It belongs to the anti-sigma-factor family.

The enzyme catalyses L-seryl-[protein] + ATP = O-phospho-L-seryl-[protein] + ADP + H(+). It carries out the reaction L-threonyl-[protein] + ATP = O-phospho-L-threonyl-[protein] + ADP + H(+). Its function is as follows. Binds to sigma F and blocks its ability to form an RNA polymerase holoenzyme (E-sigma F). Phosphorylates SpoIIAA on a serine residue. This phosphorylation may enable SpoIIAA to act as an anti-anti-sigma factor that counteracts SpoIIAB and thus releases sigma F from inhibition. This is Anti-sigma F factor from Bacillus licheniformis (strain ATCC 14580 / DSM 13 / JCM 2505 / CCUG 7422 / NBRC 12200 / NCIMB 9375 / NCTC 10341 / NRRL NRS-1264 / Gibson 46).